A 460-amino-acid polypeptide reads, in one-letter code: Elongation factor 1-alpha (460 aa).

N,N,N-trimethylglycine is present on G2. At K3 the chain carries N6,N6-dimethyllysine; alternate. At K3 the chain carries N6-methyllysine; alternate. One can recognise a tr-type G domain in the interval 6–241 (KAHINVVVIG…DAIEQPKRPT (236 aa)). The interval 15 to 22 (GHVDSGKS) is G1. GTP is bound at residue 15–22 (GHVDSGKS). Residue K31 is modified to N6-methyllysine. The segment at 71 to 75 (GITID) is G2. Residue K80 is modified to N6,N6,N6-trimethyllysine. The segment at 92–95 (DAPG) is G3. Residues 92–96 (DAPGH) and 154–157 (NKMD) contribute to the GTP site. Residues 154–157 (NKMD) are G4. Residues 193-195 (SGF) are G5. Residue K317 is modified to N6,N6-dimethyllysine; alternate. Residue K317 is modified to N6-methyllysine; alternate. Residue K391 is modified to N6-methyllysine.

The protein belongs to the TRAFAC class translation factor GTPase superfamily. Classic translation factor GTPase family. EF-Tu/EF-1A subfamily.

It localises to the cytoplasm. In terms of biological role, this protein promotes the GTP-dependent binding of aminoacyl-tRNA to the A-site of ribosomes during protein biosynthesis. In Sordaria macrospora, this protein is Elongation factor 1-alpha (TEF).